A 307-amino-acid polypeptide reads, in one-letter code: Alginate lyase (307 aa).

An N-terminal signal peptide occupies residues 1-20 (MLKSGVMVASLCLFSVPSRA).

Belongs to the polysaccharide lyase 7 family.

It is found in the secreted. The enzyme catalyses Eliminative cleavage of alginate to give oligosaccharides with 4-deoxy-alpha-L-erythro-hex-4-enuronosyl groups at their non-reducing ends and beta-D-mannuronate at their reducing end.. Its function is as follows. Degrades alginates that contain guluronic acid. The protein is Alginate lyase (alyA) of Klebsiella pneumoniae.